Here is a 555-residue protein sequence, read N- to C-terminus: Glutamine--tRNA ligase (555 aa).

The 'HIGH' region motif lies at 34 to 44 (PEPNGYLHIGH). Residues 35–37 (EPN) and 41–47 (HIGHAKS) each bind ATP. The L-glutamine site is built by Asp-67 and Tyr-212. ATP-binding positions include Thr-231, 261–262 (RL), and 269–271 (MSK). The 'KMSKS' region signature appears at 268 to 272 (VMSKR). The interaction with tRNA stretch occupies residues 317–324 (TKQDNTIE).

The protein belongs to the class-I aminoacyl-tRNA synthetase family. Monomer.

Its subcellular location is the cytoplasm. The enzyme catalyses tRNA(Gln) + L-glutamine + ATP = L-glutaminyl-tRNA(Gln) + AMP + diphosphate. The protein is Glutamine--tRNA ligase of Enterobacter sp. (strain 638).